A 486-amino-acid polypeptide reads, in one-letter code: tRNA sulfurtransferase (486 aa).

One can recognise a THUMP domain in the interval 60 to 166 (QKICAMLINI…DNQLFIIIKR (107 aa)). ATP contacts are provided by residues 184–185 (LI), Lys266, Gly288, and Gln297. A disulfide bridge links Cys345 with Cys458. A Rhodanese domain is found at 406–484 (LDSTDVVLDI…GFSNVKIYRP (79 aa)). The active-site Cysteine persulfide intermediate is the Cys458.

This sequence belongs to the ThiI family.

Its subcellular location is the cytoplasm. The enzyme catalyses [ThiI sulfur-carrier protein]-S-sulfanyl-L-cysteine + a uridine in tRNA + 2 reduced [2Fe-2S]-[ferredoxin] + ATP + H(+) = [ThiI sulfur-carrier protein]-L-cysteine + a 4-thiouridine in tRNA + 2 oxidized [2Fe-2S]-[ferredoxin] + AMP + diphosphate. It catalyses the reaction [ThiS sulfur-carrier protein]-C-terminal Gly-Gly-AMP + S-sulfanyl-L-cysteinyl-[cysteine desulfurase] + AH2 = [ThiS sulfur-carrier protein]-C-terminal-Gly-aminoethanethioate + L-cysteinyl-[cysteine desulfurase] + A + AMP + 2 H(+). The protein operates within cofactor biosynthesis; thiamine diphosphate biosynthesis. Functionally, catalyzes the ATP-dependent transfer of a sulfur to tRNA to produce 4-thiouridine in position 8 of tRNAs, which functions as a near-UV photosensor. Also catalyzes the transfer of sulfur to the sulfur carrier protein ThiS, forming ThiS-thiocarboxylate. This is a step in the synthesis of thiazole, in the thiamine biosynthesis pathway. The sulfur is donated as persulfide by IscS. This Blochmanniella pennsylvanica (strain BPEN) protein is tRNA sulfurtransferase.